A 165-amino-acid chain; its full sequence is Protein-export protein SecB (165 aa).

The protein belongs to the SecB family. Homotetramer, a dimer of dimers. One homotetramer interacts with 1 SecA dimer.

It localises to the cytoplasm. Its function is as follows. One of the proteins required for the normal export of preproteins out of the cell cytoplasm. It is a molecular chaperone that binds to a subset of precursor proteins, maintaining them in a translocation-competent state. It also specifically binds to its receptor SecA. This is Protein-export protein SecB from Ruegeria pomeroyi (strain ATCC 700808 / DSM 15171 / DSS-3) (Silicibacter pomeroyi).